We begin with the raw amino-acid sequence, 208 residues long: ATP phosphoribosyltransferase (208 aa).

The protein belongs to the ATP phosphoribosyltransferase family. Short subfamily. In terms of assembly, heteromultimer composed of HisG and HisZ subunits.

Its subcellular location is the cytoplasm. The enzyme catalyses 1-(5-phospho-beta-D-ribosyl)-ATP + diphosphate = 5-phospho-alpha-D-ribose 1-diphosphate + ATP. The protein operates within amino-acid biosynthesis; L-histidine biosynthesis; L-histidine from 5-phospho-alpha-D-ribose 1-diphosphate: step 1/9. Its function is as follows. Catalyzes the condensation of ATP and 5-phosphoribose 1-diphosphate to form N'-(5'-phosphoribosyl)-ATP (PR-ATP). Has a crucial role in the pathway because the rate of histidine biosynthesis seems to be controlled primarily by regulation of HisG enzymatic activity. The sequence is that of ATP phosphoribosyltransferase from Oceanobacillus iheyensis (strain DSM 14371 / CIP 107618 / JCM 11309 / KCTC 3954 / HTE831).